The sequence spans 359 residues: Probable mannitol dehydrogenase (359 aa).

Residues Cys-50, His-72, Cys-103, Cys-106, Cys-109, Cys-117, and Cys-165 each contribute to the Zn(2+) site.

This sequence belongs to the zinc-containing alcohol dehydrogenase family. Zn(2+) serves as cofactor.

The enzyme catalyses D-mannitol + NAD(+) = D-mannose + NADH + H(+). Functionally, oxidizes mannitol to mannose. Provides the initial step by which translocated mannitol is committed to central metabolism and, by regulating mannitol pool size, is important in regulating salt tolerance at the cellular level. The polypeptide is Probable mannitol dehydrogenase (CAD1) (Medicago sativa (Alfalfa)).